We begin with the raw amino-acid sequence, 284 residues long: Bifunctional protein FolD (284 aa).

Residues 166–168 (GAS) and Ile232 contribute to the NADP(+) site.

Belongs to the tetrahydrofolate dehydrogenase/cyclohydrolase family. Homodimer.

It catalyses the reaction (6R)-5,10-methylene-5,6,7,8-tetrahydrofolate + NADP(+) = (6R)-5,10-methenyltetrahydrofolate + NADPH. The catalysed reaction is (6R)-5,10-methenyltetrahydrofolate + H2O = (6R)-10-formyltetrahydrofolate + H(+). Its pathway is one-carbon metabolism; tetrahydrofolate interconversion. Its function is as follows. Catalyzes the oxidation of 5,10-methylenetetrahydrofolate to 5,10-methenyltetrahydrofolate and then the hydrolysis of 5,10-methenyltetrahydrofolate to 10-formyltetrahydrofolate. In Pseudomonas fluorescens (strain Pf0-1), this protein is Bifunctional protein FolD.